We begin with the raw amino-acid sequence, 184 residues long: Phosphopantetheine adenylyltransferase (184 aa).

Ser-8 is a substrate binding site. Residues 8–9 (SF) and His-16 contribute to the ATP site. Residues Lys-40, Leu-74, and Arg-88 each contribute to the substrate site. Residues 89-91 (GLR), Glu-99, and 123-129 (WSFVSST) contribute to the ATP site.

This sequence belongs to the bacterial CoaD family. As to quaternary structure, homohexamer. Requires Mg(2+) as cofactor.

Its subcellular location is the cytoplasm. It carries out the reaction (R)-4'-phosphopantetheine + ATP + H(+) = 3'-dephospho-CoA + diphosphate. Its pathway is cofactor biosynthesis; coenzyme A biosynthesis; CoA from (R)-pantothenate: step 4/5. Functionally, reversibly transfers an adenylyl group from ATP to 4'-phosphopantetheine, yielding dephospho-CoA (dPCoA) and pyrophosphate. The polypeptide is Phosphopantetheine adenylyltransferase (Deinococcus geothermalis (strain DSM 11300 / CIP 105573 / AG-3a)).